The primary structure comprises 405 residues: Probable glucan 1,3-beta-glucosidase A (405 aa).

The first 26 residues, 1-26 (MFPRISQAAILAHSLLAVCTSAATLA), serve as a signal peptide directing secretion. Glu198 serves as the catalytic Proton donor. 2 disulfides stabilise this stretch: Cys278-Cys403 and Cys304-Cys330. Glu296 (nucleophile) is an active-site residue.

Belongs to the glycosyl hydrolase 5 (cellulase A) family. Monomer. Mn(2+) serves as cofactor.

The protein resides in the secreted. The catalysed reaction is Successive hydrolysis of beta-D-glucose units from the non-reducing ends of (1-&gt;3)-beta-D-glucans, releasing alpha-glucose.. Its function is as follows. Beta-glucanases participate in the metabolism of beta-glucan, the main structural component of the cell wall. It could also function biosynthetically as a transglycosylase. This chain is Probable glucan 1,3-beta-glucosidase A (exgA), found in Emericella nidulans (strain FGSC A4 / ATCC 38163 / CBS 112.46 / NRRL 194 / M139) (Aspergillus nidulans).